The primary structure comprises 218 residues: Capsid protein (218 aa).

Residue Met1 is modified to N-acetylmethionine; by host. The disordered stretch occupies residues 1-30 (MDKSGSPNASRTSRRRRPRRGSRSASGADA). Residues 12–22 (TSRRRRPRRGS) are compositionally biased toward basic residues.

The protein belongs to the cucumovirus capsid protein family.

The protein localises to the virion. Its function is as follows. Capsid protein. Probably binds RNA and plays a role in packaging. The sequence is that of Capsid protein from Cucumis sativus (Cucumber).